A 103-amino-acid polypeptide reads, in one-letter code: Nucleoid-associated protein A2cp1_3777 (103 aa).

The protein belongs to the YbaB/EbfC family. As to quaternary structure, homodimer.

The protein localises to the cytoplasm. It localises to the nucleoid. Binds to DNA and alters its conformation. May be involved in regulation of gene expression, nucleoid organization and DNA protection. This is Nucleoid-associated protein A2cp1_3777 from Anaeromyxobacter dehalogenans (strain 2CP-1 / ATCC BAA-258).